Reading from the N-terminus, the 178-residue chain is Bifunctional protein PyrR (178 aa).

Residues 97-109 (VVLVDDVLYTGRT) carry the PRPP-binding motif.

Belongs to the purine/pyrimidine phosphoribosyltransferase family. PyrR subfamily.

The catalysed reaction is UMP + diphosphate = 5-phospho-alpha-D-ribose 1-diphosphate + uracil. Functionally, regulates the transcription of the pyrimidine nucleotide (pyr) operon in response to exogenous pyrimidines. In terms of biological role, also displays a weak uracil phosphoribosyltransferase activity which is not physiologically significant. The polypeptide is Bifunctional protein PyrR (Herpetosiphon aurantiacus (strain ATCC 23779 / DSM 785 / 114-95)).